A 500-amino-acid chain; its full sequence is Protein FAM83F (500 aa).

At Ala-2 the chain carries N-acetylalanine. The tract at residues 2–300 (AESQLNCLDE…LYAISEEVDL (299 aa)) is DUF1669. A Phosphoserine modification is found at Ser-4. 3 disordered regions span residues 82 to 109 (NARG…AYWP), 347 to 366 (QQRE…SGGE), and 391 to 500 (IPLG…CVIS). Over residues 397–419 (SQKDGRMVSHMHRDLKPKSREAP) the composition is skewed to basic and acidic residues. Composition is skewed to low complexity over residues 425 to 442 (GEAA…SSRL) and 458 to 468 (SSVSTETSEVE). A compositionally biased stretch (polar residues) spans 477-500 (ENSSADISGKTSPSSAKPSNCVIS). Ser-479 carries the post-translational modification Phosphoserine.

Belongs to the FAM83 family. Directly interacts (via DUF1669) with CSNK1A1 and CSNK1A1L.

The protein resides in the cell membrane. In Homo sapiens (Human), this protein is Protein FAM83F (FAM83F).